The following is a 94-amino-acid chain: Large ribosomal subunit protein bL28 (94 aa).

Residues 1-21 (MARRCEVTGRGTVSGNNVSHS) form a disordered region. Residues 11-20 (GTVSGNNVSH) show a composition bias toward polar residues.

The protein belongs to the bacterial ribosomal protein bL28 family.

This Leptospira interrogans serogroup Icterohaemorrhagiae serovar copenhageni (strain Fiocruz L1-130) protein is Large ribosomal subunit protein bL28.